The chain runs to 124 residues: Protein TAR1 (124 aa).

The interval 80–124 is disordered; sequence KNRTPRHTGFSPSMTSCSKEHRQGTAPKLPSPNYNSGTEGTRFQI. Polar residues predominate over residues 111–124; that stretch reads PNYNSGTEGTRFQI.

It localises to the mitochondrion. Functionally, may be involved in mtDNA stability or mitochondrial gene expression regulation at the post-transcriptional level. This is Protein TAR1 (TAR1) from Saccharomyces cerevisiae (strain ATCC 204508 / S288c) (Baker's yeast).